The primary structure comprises 222 residues: Probable RNA 2'-phosphotransferase (222 aa).

The protein belongs to the KptA/TPT1 family.

Its function is as follows. Removes the 2'-phosphate from RNA via an intermediate in which the phosphate is ADP-ribosylated by NAD followed by a presumed transesterification to release the RNA and generate ADP-ribose 1''-2''-cyclic phosphate (APPR&gt;P). May function as an ADP-ribosylase. This is Probable RNA 2'-phosphotransferase from Haloarcula marismortui (strain ATCC 43049 / DSM 3752 / JCM 8966 / VKM B-1809) (Halobacterium marismortui).